An 819-amino-acid chain; its full sequence is Ferric-pyoverdine 358 receptor (819 aa).

The first 47 residues, 1–47, serve as a signal peptide directing secretion; that stretch reads MSKPLPSALNPLAKALLIRHSLRPRHALSRIGMGLALSSALVFQVQA. The short motif at 115–122 is the TonB box element; sequence NTVTVTAS. A TBDR plug domain is found at 166 to 276; that stretch reads SIRETPQTIT…PSAVVNVIRK (111 aa). Residues 281–819 enclose the TBDR beta-barrel domain; that stretch reads EFKSHIQAGV…NATVTLRYDF (539 aa). Positions 802-819 match the TonB C-terminal box motif; sequence YGHYGAPRNATVTLRYDF.

The protein belongs to the TonB-dependent receptor family.

It is found in the cell outer membrane. Specific receptor for the siderophore ferric pyoverdine (pseudobactin) 358. The sequence is that of Ferric-pyoverdine 358 receptor (pupA) from Pseudomonas putida (Arthrobacter siderocapsulatus).